The chain runs to 527 residues: Peptide chain release factor 3 (527 aa).

The tr-type G domain maps to 9–278 (NKRRTFAIIS…GLTQWAPKPQ (270 aa)). Residues 18-25 (SHPDAGKT), 86-90 (DTPGH), and 140-143 (NKLD) each bind GTP.

This sequence belongs to the TRAFAC class translation factor GTPase superfamily. Classic translation factor GTPase family. PrfC subfamily.

It localises to the cytoplasm. Increases the formation of ribosomal termination complexes and stimulates activities of RF-1 and RF-2. It binds guanine nucleotides and has strong preference for UGA stop codons. It may interact directly with the ribosome. The stimulation of RF-1 and RF-2 is significantly reduced by GTP and GDP, but not by GMP. This Haemophilus influenzae (strain PittGG) protein is Peptide chain release factor 3.